A 241-amino-acid chain; its full sequence is Core protein D3 homolog (241 aa).

The protein belongs to the chordopoxvirinae D3 family.

The protein resides in the virion. In terms of biological role, late protein which is part of a large complex required for early virion morphogenesis. This complex participates in the formation of virosomes and the incorporation of virosomal contents into nascent immature virions. The polypeptide is Core protein D3 homolog (Oryctolagus cuniculus (Rabbit)).